The following is a 378-amino-acid chain: D-alanine--D-alanine ligase (378 aa).

The ATP-grasp domain maps to 140-346 (KKIISQAGIR…YSDLIDRLIQ (207 aa)). 170–225 (EEKLGNLTFVKPAKQGSSVGIHRVTNAEEYEKALDDAFKYDYKILVEQGIANPQEI) lines the ATP pocket. D300, E313, and N315 together coordinate Mg(2+).

The protein belongs to the D-alanine--D-alanine ligase family. Requires Mg(2+) as cofactor. It depends on Mn(2+) as a cofactor.

The protein localises to the cytoplasm. The enzyme catalyses 2 D-alanine + ATP = D-alanyl-D-alanine + ADP + phosphate + H(+). Its pathway is cell wall biogenesis; peptidoglycan biosynthesis. Its function is as follows. Cell wall formation. This is D-alanine--D-alanine ligase from Limosilactobacillus reuteri (strain DSM 20016) (Lactobacillus reuteri).